We begin with the raw amino-acid sequence, 323 residues long: o-succinylbenzoate synthase (323 aa).

Lys-134 (proton donor) is an active-site residue. Residues Asp-162, Glu-191, and Asp-214 each contribute to the Mg(2+) site. Lys-236 functions as the Proton acceptor in the catalytic mechanism.

It belongs to the mandelate racemase/muconate lactonizing enzyme family. MenC type 1 subfamily. The cofactor is a divalent metal cation.

It carries out the reaction (1R,6R)-6-hydroxy-2-succinyl-cyclohexa-2,4-diene-1-carboxylate = 2-succinylbenzoate + H2O. The protein operates within quinol/quinone metabolism; 1,4-dihydroxy-2-naphthoate biosynthesis; 1,4-dihydroxy-2-naphthoate from chorismate: step 4/7. It functions in the pathway quinol/quinone metabolism; menaquinone biosynthesis. In terms of biological role, converts 2-succinyl-6-hydroxy-2,4-cyclohexadiene-1-carboxylate (SHCHC) to 2-succinylbenzoate (OSB). The sequence is that of o-succinylbenzoate synthase from Edwardsiella ictaluri (strain 93-146).